Consider the following 627-residue polypeptide: Pescadillo homolog (627 aa).

The BRCT domain occupies 321-414; the sequence is RLRTLFKGLK…QLLPTNKYFI (94 aa). 3 disordered regions span residues 450-469, 488-566, and 595-627; these read HAQS…ETVD, YKKY…MVKP, and TIEA…KLGK. Residues Ser-453 and Ser-457 each carry the phosphoserine modification. 2 stretches are compositionally biased toward acidic residues: residues 454 to 469 and 497 to 521; these read DDDS…ETVD and VNED…EELD. The span at 522–533 shows a compositional bias: basic and acidic residues; that stretch reads EKTKRLQEEKQK. Residues 540–549 are compositionally biased toward basic residues; the sequence is KVHKVNKRQV. 2 stretches are compositionally biased toward basic and acidic residues: residues 550–559 and 595–615; these read HKAEVDEHRL and TIEA…RKEA. A coiled-coil region spans residues 582 to 625; sequence KEKEEWLLRKKRRTIEASEKEARKTAKREARKEAAAAAAKASKL. The span at 616 to 627 shows a compositional bias: low complexity; it reads AAAAAKASKLGK.

It belongs to the pescadillo family.

It localises to the nucleus. The protein localises to the nucleolus. Its subcellular location is the nucleoplasm. In terms of biological role, required for maturation of ribosomal RNAs and formation of the large ribosomal subunit. The chain is Pescadillo homolog from Drosophila simulans (Fruit fly).